We begin with the raw amino-acid sequence, 297 residues long: IMPACT family member C14C8.09c (297 aa).

Positions 225–255 form a coiled coil; sequence LRSELQEKNQKDKKKEVNKLEEKMTNAKEPN. Basic and acidic residues-rich tracts occupy residues 228–250 and 280–297; these read ELQEKNQKDKKKEVNKLEEKMTN and SVDHKEASKIIKDVEKEE. The segment at 228–297 is disordered; sequence ELQEKNQKDK…KIIKDVEKEE (70 aa).

Belongs to the IMPACT family.

This Schizosaccharomyces pombe (strain 972 / ATCC 24843) (Fission yeast) protein is IMPACT family member C14C8.09c.